The following is a 72-amino-acid chain: Translation initiation factor IF-1 (72 aa).

The S1-like domain occupies 1-72 (MAKEDCIEME…TKGRIKFRSK (72 aa)).

The protein belongs to the IF-1 family. As to quaternary structure, component of the 30S ribosomal translation pre-initiation complex which assembles on the 30S ribosome in the order IF-2 and IF-3, IF-1 and N-formylmethionyl-tRNA(fMet); mRNA recruitment can occur at any time during PIC assembly.

The protein localises to the cytoplasm. One of the essential components for the initiation of protein synthesis. Stabilizes the binding of IF-2 and IF-3 on the 30S subunit to which N-formylmethionyl-tRNA(fMet) subsequently binds. Helps modulate mRNA selection, yielding the 30S pre-initiation complex (PIC). Upon addition of the 50S ribosomal subunit IF-1, IF-2 and IF-3 are released leaving the mature 70S translation initiation complex. The sequence is that of Translation initiation factor IF-1 from Francisella tularensis subsp. novicida (strain U112).